We begin with the raw amino-acid sequence, 325 residues long: Bifunctional nuclease 1 (325 aa).

Residues 117 to 252 (CVHNNPQGGH…YLAYSDGMRV (136 aa)) form the BFN domain. The UVR domain maps to 284–318 (TKEFNILSKMMQAVDEERYDEAAEWRDKLGQFRAK).

Belongs to the bifunctional nuclease family.

It is found in the nucleus. In terms of biological role, bifunctional nuclease with both RNase and DNase activities. Involved in basal defense response. Participates in abscisic acid-derived callose deposition following infection by a necrotrophic pathogen. The chain is Bifunctional nuclease 1 (BBD1) from Arabidopsis thaliana (Mouse-ear cress).